The following is a 341-amino-acid chain: 33 kDa chaperonin (341 aa).

2 cysteine pairs are disulfide-bonded: cysteine 245-cysteine 247 and cysteine 278-cysteine 281.

The protein belongs to the HSP33 family. Post-translationally, under oxidizing conditions two disulfide bonds are formed involving the reactive cysteines. Under reducing conditions zinc is bound to the reactive cysteines and the protein is inactive.

The protein localises to the cytoplasm. Functionally, redox regulated molecular chaperone. Protects both thermally unfolding and oxidatively damaged proteins from irreversible aggregation. Plays an important role in the bacterial defense system toward oxidative stress. The protein is 33 kDa chaperonin of Thermus thermophilus (strain ATCC 27634 / DSM 579 / HB8).